A 67-amino-acid chain; its full sequence is ORF2p protein (67 aa).

The important for viral replication in intestinal cells stretch occupies residues 13–18 (WIGHPV). The chain crosses the lipid bilayer at residues 22-38 (AIIYPFVGFIPLSLKEV).

It localises to the host cytoplasmic vesicle membrane. Functionally, facilitates virus release from intestinal cells in vitro, possibly through the host autophagic pathway. The protein is ORF2p protein of Homo sapiens (Human).